Here is a 29-residue protein sequence, read N- to C-terminus: Galanin (29 aa).

The residue at position 29 (Ala-29) is an Alanine amide.

Belongs to the galanin family.

Its subcellular location is the secreted. Functionally, contracts smooth muscle of the gastrointestinal and genitourinary tract, regulates growth hormone release, modulates insulin release, and may be involved in the control of adrenal secretion. This is Galanin (GAL) from Ovis aries (Sheep).